The following is a 481-amino-acid chain: Cys-Gly metallodipeptidase DUG1 (481 aa).

Histidine 102 is a binding site for Zn(2+). Aspartate 104 is an active-site residue. Residue aspartate 137 participates in Zn(2+) binding. Residue glutamate 171 is the Proton acceptor of the active site. Glutamate 172, aspartate 200, and histidine 450 together coordinate Zn(2+). Residue serine 451 is modified to Phosphoserine.

The protein belongs to the peptidase M20A family. In terms of assembly, homodimer. Component of the GSH degradosomal complex composed of at least DUG1, DUG2 and DUG3. Requires Zn(2+) as cofactor. It depends on Mn(2+) as a cofactor.

It localises to the cytoplasm. The protein resides in the mitochondrion. In terms of biological role, catalytic component of the GSH degradosomal complex involved in the degradation of glutathione (GSH) and other peptides containing a gamma-glu-X bond. Also functions in a DUG2-DUG3-independent manner as a dipeptidase with high specificity for Cys-Gly and no activity toward tri- or tetrapeptides. In Saccharomyces cerevisiae (strain ATCC 204508 / S288c) (Baker's yeast), this protein is Cys-Gly metallodipeptidase DUG1 (DUG1).